Here is an 89-residue protein sequence, read N- to C-terminus: Large ribosomal subunit protein bL27 (89 aa).

The segment at Met1–Arg20 is disordered.

Belongs to the bacterial ribosomal protein bL27 family.

This is Large ribosomal subunit protein bL27 from Rhodopseudomonas palustris (strain HaA2).